A 215-amino-acid chain; its full sequence is ATP phosphoribosyltransferase (215 aa).

The protein belongs to the ATP phosphoribosyltransferase family. Short subfamily. Heteromultimer composed of HisG and HisZ subunits.

The protein localises to the cytoplasm. It carries out the reaction 1-(5-phospho-beta-D-ribosyl)-ATP + diphosphate = 5-phospho-alpha-D-ribose 1-diphosphate + ATP. It participates in amino-acid biosynthesis; L-histidine biosynthesis; L-histidine from 5-phospho-alpha-D-ribose 1-diphosphate: step 1/9. Its function is as follows. Catalyzes the condensation of ATP and 5-phosphoribose 1-diphosphate to form N'-(5'-phosphoribosyl)-ATP (PR-ATP). Has a crucial role in the pathway because the rate of histidine biosynthesis seems to be controlled primarily by regulation of HisG enzymatic activity. This Gloeothece citriformis (strain PCC 7424) (Cyanothece sp. (strain PCC 7424)) protein is ATP phosphoribosyltransferase.